A 228-amino-acid polypeptide reads, in one-letter code: CD302 antigen (228 aa).

The first 20 residues, 1–20 (MPHAALSSLVLLSLATAIVA), serve as a signal peptide directing secretion. Topologically, residues 21–165 (DCPSSTWVQF…YDKKYLSDNH (145 aa)) are extracellular. The C-type lectin domain occupies 30–149 (FQGSCYAFLQ…CEISSVEGTL (120 aa)). Asparagine 107 carries N-linked (GlcNAc...) asparagine glycosylation. The cysteines at positions 125 and 140 are disulfide-linked. The helical transmembrane segment at 166-186 (ILISTLVIASTVTLAVLGAII) threads the bilayer. Topologically, residues 187–228 (WFLYRRNARSGFTSFSPAPLSPYSDGCALVVAEEDEYAVQLD) are cytoplasmic.

The protein resides in the membrane. It is found in the cell projection. Its subcellular location is the filopodium. The protein localises to the cytoplasm. It localises to the cell cortex. The protein resides in the microvillus. Functionally, potential multifunctional C-type lectin receptor that may play roles in endocytosis and phagocytosis as well as in cell adhesion and migration. The polypeptide is CD302 antigen (Cd302) (Mus musculus (Mouse)).